A 246-amino-acid chain; its full sequence is uncharacterized protein (246 aa).

4 helical membrane passes run 32–52 (TLFF…VGFI), 69–89 (IIAI…MCPF), 121–141 (IYFK…GVKI), and 146–166 (LAYL…MFFC). 4Fe-4S ferredoxin-type domains are found at residues 185 to 213 (FKLK…ITEK) and 210 to 239 (ITEK…FSAF). Positions 194, 197, 200, 204, 219, 222, 225, and 229 each coordinate [4Fe-4S] cluster.

Its subcellular location is the cell membrane. This is an uncharacterized protein from Methanocaldococcus jannaschii (strain ATCC 43067 / DSM 2661 / JAL-1 / JCM 10045 / NBRC 100440) (Methanococcus jannaschii).